The chain runs to 105 residues: Insulin-like peptide 7 (105 aa).

The N-terminal stretch at M1 to Q18 is a signal peptide. Residues Y19 to K57 constitute a propeptide that is removed on maturation. Disulfide bonds link C61–C90, C73–C103, C77–C104, and C89–C94.

The protein belongs to the insulin family.

The protein resides in the secreted. Functionally, insulin-like peptide which plays a role in ageing as a consequence of daf-16 activity. The sequence is that of Insulin-like peptide 7 from Caenorhabditis elegans.